The primary structure comprises 687 residues: Elongation factor G (687 aa).

The tr-type G domain occupies 8-282; the sequence is NKFRNIGIMA…AVLAYLPSPL (275 aa). GTP contacts are provided by residues 17 to 24, 81 to 85, and 135 to 138; these read AHIDAGKT, DTPGH, and NKMD.

The protein belongs to the TRAFAC class translation factor GTPase superfamily. Classic translation factor GTPase family. EF-G/EF-2 subfamily.

The protein resides in the cytoplasm. In terms of biological role, catalyzes the GTP-dependent ribosomal translocation step during translation elongation. During this step, the ribosome changes from the pre-translocational (PRE) to the post-translocational (POST) state as the newly formed A-site-bound peptidyl-tRNA and P-site-bound deacylated tRNA move to the P and E sites, respectively. Catalyzes the coordinated movement of the two tRNA molecules, the mRNA and conformational changes in the ribosome. This chain is Elongation factor G, found in Clostridium novyi (strain NT).